Consider the following 237-residue polypeptide: Leucyl/phenylalanyl-tRNA--protein transferase (237 aa).

The protein belongs to the L/F-transferase family.

The protein resides in the cytoplasm. It catalyses the reaction N-terminal L-lysyl-[protein] + L-leucyl-tRNA(Leu) = N-terminal L-leucyl-L-lysyl-[protein] + tRNA(Leu) + H(+). The enzyme catalyses N-terminal L-arginyl-[protein] + L-leucyl-tRNA(Leu) = N-terminal L-leucyl-L-arginyl-[protein] + tRNA(Leu) + H(+). The catalysed reaction is L-phenylalanyl-tRNA(Phe) + an N-terminal L-alpha-aminoacyl-[protein] = an N-terminal L-phenylalanyl-L-alpha-aminoacyl-[protein] + tRNA(Phe). In terms of biological role, functions in the N-end rule pathway of protein degradation where it conjugates Leu, Phe and, less efficiently, Met from aminoacyl-tRNAs to the N-termini of proteins containing an N-terminal arginine or lysine. The chain is Leucyl/phenylalanyl-tRNA--protein transferase from Shewanella baltica (strain OS155 / ATCC BAA-1091).